A 790-amino-acid chain; its full sequence is Protein SEY1 (790 aa).

Residues 1-692 are Cytoplasmic-facing; the sequence is MELSEGELSH…KRSIVQHITQ (692 aa). One can recognise a GB1/RHD3-type G domain in the interval 55-284; the sequence is GNNYHIISVF…VNNELFKPEY (230 aa). 65–72 is a GTP binding site; that stretch reads GSQSTGKS. A helical membrane pass occupies residues 693 to 713; it reads IPYYIYLIILVLGWNEFMAII. Topologically, residues 714–716 are lumenal; sequence RNP. Residues 717-737 traverse the membrane as a helical segment; the sequence is LFFSLSIVLGATVYVLYYLNL. The Cytoplasmic portion of the chain corresponds to 738-790; the sequence is LKPAMLVAQRTMDEVIIMAKTKLREVLIDDHEVTGRQLNKIAGGKENIELDDM.

The protein belongs to the TRAFAC class dynamin-like GTPase superfamily. GB1/RHD3 GTPase family. RHD3 subfamily.

Its subcellular location is the endoplasmic reticulum membrane. Cooperates with the reticulon proteins and tubule-shaping DP1 family proteins to generate and maintain the structure of the tubular endoplasmic reticulum network. Has GTPase activity, which is required for its function in ER organization. This is Protein SEY1 from Candida dubliniensis (strain CD36 / ATCC MYA-646 / CBS 7987 / NCPF 3949 / NRRL Y-17841) (Yeast).